The primary structure comprises 507 residues: MNEFQRGGNKHRSWQQCFLYPLFFQEDLYAIAHDYHLDRSSSSEPAENCISNAFSFLTVKRSISRIRQQNESIVLFWNCDRNQWIDRNRSSSSELILEGLVVVLEISFSMRLKHSLEVMNGWKSFRSTHCLFPLMEEKFPHSNYILDIRVPYSIHPEILVRAFRRWIRDAPSLHLLRRILYECQNSSNAENLQKAILVVLRENTKFYLFLWNSYVYECESILVPLLKRSSHSRXXXXXXXXXXXXXXXXXXXXXXXXXXXXXKKIWLLKDPFIPYVRYGERSLIAXKGTHLQVKKCRYHLLNFWQCYFHLWFQPYRVCILELSKNCSSFLGFFLSVKMKSLMVRTKMVDDLLITYIITNEFDAIAPIRSIIGLLAKERFCDISGRPISKLAWTSLSDDDILDRFDRIWRNLFHYYSGSINQDGLYCIKYILLLSCAKTLACKHKTTIRVVREELGSKLFTKSFSKEREFISSFFSKTRSQRERIWHLDILRIIPLANSWQKIQNKKK.

Belongs to the intron maturase 2 family. MatK subfamily.

It localises to the plastid. It is found in the chloroplast. In terms of biological role, usually encoded in the trnK tRNA gene intron. Probably assists in splicing its own and other chloroplast group II introns. This Araucaria heterophylla (Norfolk Island pine) protein is Maturase K.